Here is a 67-residue protein sequence, read N- to C-terminus: Large ribosomal subunit protein uL29 (67 aa).

The protein belongs to the universal ribosomal protein uL29 family.

The protein is Large ribosomal subunit protein uL29 of Cereibacter sphaeroides (strain ATCC 17025 / ATH 2.4.3) (Rhodobacter sphaeroides).